The primary structure comprises 325 residues: Intelectin-2 (325 aa).

The N-terminal stretch at 1-26 (MLSMLRTMTRLCFLLFFSVATSGCSA) is a signal peptide. The 224-residue stretch at 44–267 (FSFSSLPRSC…AANALCAGIK (224 aa)) folds into the Fibrinogen C-terminal domain. Cys-53 and Cys-82 form a disulfide bridge. Residues His-98, Glu-99, Asp-101, Gly-104, Gly-109, Asp-110, and Asp-145 each coordinate Ca(2+). 3 disulfides stabilise this stretch: Cys-106/Cys-292, Cys-211/Cys-271, and Cys-263/Cys-277. Ca(2+)-binding residues include Asn-272, Glu-274, and Asp-294. A carbohydrate is bound at residue 274-275 (EH).

As to expression, expressed only in the small intestine.

It localises to the secreted. May play a role in the defense system against pathogens. The sequence is that of Intelectin-2 (ITLN2) from Homo sapiens (Human).